A 202-amino-acid polypeptide reads, in one-letter code: uncharacterized protein (202 aa).

In terms of domain architecture, START spans 1-202 (MRGILRMTVL…KGLRSAAEKR (202 aa)).

May play a role in the interaction of the bacterium with animal cells. This is an uncharacterized protein from Pseudomonas aeruginosa (strain ATCC 15692 / DSM 22644 / CIP 104116 / JCM 14847 / LMG 12228 / 1C / PRS 101 / PAO1).